The following is a 66-amino-acid chain: Dermaseptin PD-3-7 (66 aa).

The first 22 residues, 1–22, serve as a signal peptide directing secretion; it reads MSFMKKSLLLVLFLGVVSLSNC. Positions 23–40 are excised as a propeptide; it reads EEEKGENENEDHEEHHEE.

As to expression, expressed by the skin glands.

The protein localises to the secreted. Possesses a potent antimicrobial activity against Gram-positive and Gram-negative bacteria. Probably acts by disturbing membrane functions with its amphipathic structure. The chain is Dermaseptin PD-3-7 from Agalychnis dacnicolor (Giant Mexican leaf frog).